Here is a 512-residue protein sequence, read N- to C-terminus: Delta(14)-sterol reductase (512 aa).

8 helical membrane-spanning segments follow: residues 27-47, 100-120, 140-160, 172-192, 242-262, 278-298, 324-344, and 353-373; these read IGAS…GFLC, AVLG…LLPA, ACLS…VRGP, YIQL…YVYL, SFME…AFAA, WTPL…VIIS, FGFM…SIQA, and ALGP…YYIF. Residues Lys-380, Arg-384, Leu-407, Trp-412, and 419 to 420 contribute to the NADP(+) site; that span reads NY. The next 2 helical transmembrane spans lie at 418-438 and 458-478; these read INYL…LAAG and MKGA…ILLI. NADP(+)-binding positions include Asp-484, 488–492, and Tyr-499; that span reads CRRKY.

It belongs to the ERG4/ERG24 family.

The protein localises to the membrane. The catalysed reaction is 4,4-dimethyl-5alpha-cholesta-8,24-dien-3beta-ol + NADP(+) = 4,4-dimethyl-5alpha-cholesta-8,14,24-trien-3beta-ol + NADPH + H(+). It functions in the pathway steroid biosynthesis; zymosterol biosynthesis; zymosterol from lanosterol: step 2/6. Reduces the C14=C15 double bond of 4,4-dimethyl-cholesta-8,14,24-trienol to produce 4,4-dimethyl-cholesta-8,24-dienol. This chain is Delta(14)-sterol reductase (ERG3), found in Septoria lycopersici (Tomato leaf spot fungus).